A 305-amino-acid chain; its full sequence is Oxygen-dependent coproporphyrinogen-III oxidase (305 aa).

Serine 98 lines the substrate pocket. Residues histidine 102 and histidine 112 each contribute to the a divalent metal cation site. Catalysis depends on histidine 112, which acts as the Proton donor. 114-116 (NVR) contributes to the substrate binding site. 2 residues coordinate a divalent metal cation: histidine 151 and histidine 181. The important for dimerization stretch occupies residues 246–281 (YVEFNLVYDRGTLFGLQSGGRTESILMSMPPLARWE). Substrate is bound at residue 264 to 266 (GGR).

Belongs to the aerobic coproporphyrinogen-III oxidase family. In terms of assembly, homodimer. Requires a divalent metal cation as cofactor.

Its subcellular location is the cytoplasm. It catalyses the reaction coproporphyrinogen III + O2 + 2 H(+) = protoporphyrinogen IX + 2 CO2 + 2 H2O. Its pathway is porphyrin-containing compound metabolism; protoporphyrin-IX biosynthesis; protoporphyrinogen-IX from coproporphyrinogen-III (O2 route): step 1/1. Functionally, involved in the heme biosynthesis. Catalyzes the aerobic oxidative decarboxylation of propionate groups of rings A and B of coproporphyrinogen-III to yield the vinyl groups in protoporphyrinogen-IX. In Vibrio campbellii (strain ATCC BAA-1116), this protein is Oxygen-dependent coproporphyrinogen-III oxidase.